The primary structure comprises 110 residues: Large ribosomal subunit protein uL22 (110 aa).

This sequence belongs to the universal ribosomal protein uL22 family. Part of the 50S ribosomal subunit.

This protein binds specifically to 23S rRNA; its binding is stimulated by other ribosomal proteins, e.g. L4, L17, and L20. It is important during the early stages of 50S assembly. It makes multiple contacts with different domains of the 23S rRNA in the assembled 50S subunit and ribosome. Functionally, the globular domain of the protein is located near the polypeptide exit tunnel on the outside of the subunit, while an extended beta-hairpin is found that lines the wall of the exit tunnel in the center of the 70S ribosome. This Verminephrobacter eiseniae (strain EF01-2) protein is Large ribosomal subunit protein uL22.